The following is a 595-amino-acid chain: Probable hydrolase M10 (595 aa).

A signal peptide spans 1 to 23 (MRFTSTILLRVAVLLSLGGGSQT). 6 N-linked (GlcNAc...) asparagine glycosylation sites follow: Asn-59, Asn-87, Asn-266, Asn-436, Asn-457, and Asn-561.

This sequence belongs to the beta-lactamase family.

The protein operates within secondary metabolite biosynthesis. Functionally, probable hydrolase; part of the gene cluster that mediates the biosynthesis of squalestatin S1 (SQS1, also known as zaragozic acid A), a heavily oxidized fungal polyketide that offers potent cholesterol lowering activity by targeting squalene synthase (SS). SQS1 is composed of a 2,8-dioxobicyclic[3.2.1]octane-3,4,5-tricarboxyclic acid core that is connected to two lipophilic polyketide arms. These initial steps feature the priming of an unusual benzoic acid starter unit onto the highly reducing polyketide synthase pks2, followed by oxaloacetate extension and product release to generate a tricarboxylic acid containing product. The phenylalanine ammonia lyase (PAL) M7 and the acyl-CoA ligase M9 are involved in transforming phenylalanine into benzoyl-CoA. The citrate synthase-like protein R3 is involved in connecting the C-alpha-carbons of the hexaketide chain and oxaloacetate to afford the tricarboxylic acid unit. The potential hydrolytic enzymes, M8 and M10, are in close proximity to pks2 and may participate in product release. On the other side, the tetraketide arm is synthesized by a the squalestatin tetraketide synthase pks1 and enzymatically esterified to the core in the last biosynthetic step, by the acetyltransferase M4. The biosynthesis of the tetraketide must involve 3 rounds of chain extension. After the first and second rounds methyl-transfer occurs, and in all rounds of extension the ketoreductase and dehydratase are active. The enoyl reductase and C-MeT of pks1 are not active in the final round of extension. The acetyltransferase M4 appears to have a broad substrate selectivity for its acyl CoA substrate, allowing the in vitro synthesis of novel squalestatins. The biosynthesis of SQS1 requires several oxidative steps likely performed by oxidoreductases M1, R1 and R2. Finally, in support of the identification of the cluster as being responsible for SQS1 production, the cluster contains a gene encoding a putative squalene synthase (SS) R6, suggesting a likely mechanism for self-resistance. The protein is Probable hydrolase M10 of Phoma sp. (strain ATCC 20986 / MF5453).